The following is a 264-amino-acid chain: Acyl-[acyl-carrier-protein]--UDP-N-acetylglucosamine O-acyltransferase (264 aa).

This sequence belongs to the transferase hexapeptide repeat family. LpxA subfamily. In terms of assembly, homotrimer.

The protein resides in the cytoplasm. The catalysed reaction is a (3R)-hydroxyacyl-[ACP] + UDP-N-acetyl-alpha-D-glucosamine = a UDP-3-O-[(3R)-3-hydroxyacyl]-N-acetyl-alpha-D-glucosamine + holo-[ACP]. The protein operates within glycolipid biosynthesis; lipid IV(A) biosynthesis; lipid IV(A) from (3R)-3-hydroxytetradecanoyl-[acyl-carrier-protein] and UDP-N-acetyl-alpha-D-glucosamine: step 1/6. Functionally, involved in the biosynthesis of lipid A, a phosphorylated glycolipid that anchors the lipopolysaccharide to the outer membrane of the cell. In Rickettsia prowazekii (strain Madrid E), this protein is Acyl-[acyl-carrier-protein]--UDP-N-acetylglucosamine O-acyltransferase.